Consider the following 156-residue polypeptide: SsrA-binding protein (156 aa).

This sequence belongs to the SmpB family.

It is found in the cytoplasm. In terms of biological role, required for rescue of stalled ribosomes mediated by trans-translation. Binds to transfer-messenger RNA (tmRNA), required for stable association of tmRNA with ribosomes. tmRNA and SmpB together mimic tRNA shape, replacing the anticodon stem-loop with SmpB. tmRNA is encoded by the ssrA gene; the 2 termini fold to resemble tRNA(Ala) and it encodes a 'tag peptide', a short internal open reading frame. During trans-translation Ala-aminoacylated tmRNA acts like a tRNA, entering the A-site of stalled ribosomes, displacing the stalled mRNA. The ribosome then switches to translate the ORF on the tmRNA; the nascent peptide is terminated with the 'tag peptide' encoded by the tmRNA and targeted for degradation. The ribosome is freed to recommence translation, which seems to be the essential function of trans-translation. The protein is SsrA-binding protein of Maricaulis maris (strain MCS10) (Caulobacter maris).